The sequence spans 194 residues: dCTP deaminase (194 aa).

DCTP-binding positions include 110 to 115, Asp128, 136 to 138, Tyr171, Lys178, and Gln182; these read RSSLAR and VLE. The Proton donor/acceptor role is filled by Glu138. Residues 169–194 form a disordered region; sequence RPYNKRDNAKYKDQTSAVGSRISGEN. A compositionally biased stretch (basic and acidic residues) spans 170–181; sequence PYNKRDNAKYKD. Residues 182–194 show a composition bias toward polar residues; it reads QTSAVGSRISGEN.

Belongs to the dCTP deaminase family. As to quaternary structure, homotrimer.

It carries out the reaction dCTP + H2O + H(+) = dUTP + NH4(+). Its pathway is pyrimidine metabolism; dUMP biosynthesis; dUMP from dCTP (dUTP route): step 1/2. In terms of biological role, catalyzes the deamination of dCTP to dUTP. This Marinomonas sp. (strain MWYL1) protein is dCTP deaminase.